A 427-amino-acid polypeptide reads, in one-letter code: Serine--tRNA ligase (427 aa).

Residue 230 to 232 (TSE) participates in L-serine binding. Residues 260 to 262 (RRE) and V276 contribute to the ATP site. Position 283 (E283) interacts with L-serine. 347 to 350 (ELTS) is a binding site for ATP. L-serine is bound at residue T387.

This sequence belongs to the class-II aminoacyl-tRNA synthetase family. Type-1 seryl-tRNA synthetase subfamily. Homodimer. The tRNA molecule binds across the dimer.

Its subcellular location is the cytoplasm. The enzyme catalyses tRNA(Ser) + L-serine + ATP = L-seryl-tRNA(Ser) + AMP + diphosphate + H(+). It carries out the reaction tRNA(Sec) + L-serine + ATP = L-seryl-tRNA(Sec) + AMP + diphosphate + H(+). It functions in the pathway aminoacyl-tRNA biosynthesis; selenocysteinyl-tRNA(Sec) biosynthesis; L-seryl-tRNA(Sec) from L-serine and tRNA(Sec): step 1/1. Catalyzes the attachment of serine to tRNA(Ser). Is also able to aminoacylate tRNA(Sec) with serine, to form the misacylated tRNA L-seryl-tRNA(Sec), which will be further converted into selenocysteinyl-tRNA(Sec). This Micrococcus luteus (strain ATCC 4698 / DSM 20030 / JCM 1464 / CCM 169 / CCUG 5858 / IAM 1056 / NBRC 3333 / NCIMB 9278 / NCTC 2665 / VKM Ac-2230) (Micrococcus lysodeikticus) protein is Serine--tRNA ligase.